A 505-amino-acid chain; its full sequence is Histidine--tRNA ligase, mitochondrial (505 aa).

Residues 1–31 (MPHLGPLRRRAWAALLGQLLRPPSTVCTRGC) constitute a mitochondrion transit peptide. Position 66 is a phosphoserine (S66). Residues 130 to 132 (DLT), R157, Q173, D177, R326, and 330 to 331 (YY) contribute to the L-histidine site. Residue K443 is modified to N6-acetyllysine.

The protein belongs to the class-II aminoacyl-tRNA synthetase family. Homodimer.

The protein localises to the mitochondrion. The catalysed reaction is tRNA(His) + L-histidine + ATP = L-histidyl-tRNA(His) + AMP + diphosphate + H(+). Mitochondrial aminoacyl-tRNA synthetase that catalyzes the ATP-dependent ligation of histidine to the 3'-end of its cognate tRNA, via the formation of an aminoacyl-adenylate intermediate (His-AMP). The polypeptide is Histidine--tRNA ligase, mitochondrial (Hars2) (Mus musculus (Mouse)).